The following is a 558-amino-acid chain: Atlastin-1 (558 aa).

A disordered region spans residues 1–27; the sequence is MAKNRRDRNSWGGFSEKTYEWSSEEEE. Positions 1–34 are N-terminal hypervariable region (HVR); the sequence is MAKNRRDRNSWGGFSEKTYEWSSEEEEPVKKAGP. Residues 1 to 449 lie on the Cytoplasmic side of the membrane; sequence MAKNRRDRNS…NIFHAARTPA (449 aa). Residues Ser-10, Ser-22, and Ser-23 each carry the phosphoserine modification. Positions 64–309 constitute a GB1/RHD3-type G domain; sequence DKEVVAVSVA…LIPWLLSPES (246 aa). The GDP site is built by Arg-77, Lys-78, Gly-79, Lys-80, Ser-81, Phe-82, Gln-148, Arg-217, Asp-218, Val-276, and Asn-279. Residues Arg-77, Lys-78, Gly-79, Lys-80, Ser-81, and Phe-82 each coordinate GTP. Ser-81 provides a ligand contact to Mg(2+). The GTP site is built by Arg-217, Asp-218, and Val-276. Positions 347–438 are 3HB (three-helix bundle) domain; sequence MLQATAEANN…YIQYIKHNDS (92 aa). The residue at position 395 (Lys-395) is an N6-acetyllysine. Positions 412 to 439 form a coiled coil; the sequence is EFSRRYLQQLESEIDELYIQYIKHNDSK. Positions 439 to 447 are linker; the sequence is KNIFHAART. Residues 450 to 470 traverse the membrane as a helical segment; that stretch reads TLFVVIFITYVIAGVTGFIGL. Position 471 (Asp-471) is a topological domain, lumenal. A helical transmembrane segment spans residues 472–492; it reads IIASLCNMIMGLTLITLCTWA. Residues 493–558 are Cytoplasmic-facing; sequence YIRYSGEYRE…STEQSEKKKM (66 aa). The segment at 521-558 is autoinhibitory domain; the sequence is NEALYKLYSAAATHRHLYHQAFPTPKSESTEQSEKKKM.

The protein belongs to the TRAFAC class dynamin-like GTPase superfamily. GB1/RHD3 GTPase family. GB1 subfamily. In terms of assembly, monomeric and homodimeric. The homodimer, transiently formed by two molecules on opposing membranes, is the active form mediating ER membrane fusion. Interacts with REEP1, REEP5, RTN3 and RTN4 (via the transmembrane region); these proteins are involved in endoplasmic reticulum tubular network organization. Interacts with ZFYVE27; both proteins are involved in endoplasmic reticulum tubular network organization. Interacts with ARL6IP1; both proteins are involved in endoplasmic reticulum tubular network organization. Interacts with SPAST; the interaction is direct, could recruit SPAST to Golgi membranes. Interacts (via N-terminal region) with MAP4K4 (via CNH regulatory domain). May interact with TMED2. Interacts with CPT1C. Post-translationally, phosphorylated. Phosphorylation, by different kinases, of the N-terminal hypervariable region (HVR) regulates the ATL1-mediated membrane tethering step.

Its subcellular location is the endoplasmic reticulum membrane. It localises to the golgi apparatus membrane. The protein localises to the cell projection. The protein resides in the axon. The catalysed reaction is GTP + H2O = GDP + phosphate + H(+). Functionally, atlastin-1 (ATL1) is a membrane-anchored GTPase that mediates the GTP-dependent fusion of endoplasmic reticulum (ER) membranes, maintaining the continuous ER network. It facilitates the formation of three-way junctions where ER tubules intersect. Two atlastin-1 on neighboring ER tubules bind GTP and form loose homodimers through the GB1/RHD3-type G domains and 3HB regions. Upon GTP hydrolysis, the 3HB regions tighten, pulling the membranes together to drive their fusion. After fusion, the homodimer disassembles upon release of inorganic phosphate (Pi). Subsequently, GDP dissociates, resetting the monomers to a conformation ready for a new fusion cycle. May also regulate more or less directly Golgi biogenesis. Indirectly regulates axonal development. The chain is Atlastin-1 from Pongo abelii (Sumatran orangutan).